We begin with the raw amino-acid sequence, 320 residues long: Homoserine kinase (320 aa).

100–110 (PLSSGMGSSAA) is a binding site for ATP.

It belongs to the GHMP kinase family. Homoserine kinase subfamily.

It localises to the cytoplasm. It carries out the reaction L-homoserine + ATP = O-phospho-L-homoserine + ADP + H(+). It functions in the pathway amino-acid biosynthesis; L-threonine biosynthesis; L-threonine from L-aspartate: step 4/5. Catalyzes the ATP-dependent phosphorylation of L-homoserine to L-homoserine phosphate. The sequence is that of Homoserine kinase from Chlorobium phaeobacteroides (strain BS1).